Reading from the N-terminus, the 1507-residue chain is Paired amphipathic helix protein sin-3 (1507 aa).

5 disordered regions span residues 1 to 26 (MYNPPPGGGGGNNGGDQSQQQPTNNA), 228 to 286 (PLAL…PPRV), 397 to 450 (ELGS…MMEE), 543 to 569 (VDDVPGPSNAPQEIKKPDDIEKKDSSK), and 1349 to 1434 (IPRE…MDHL). Polar residues predominate over residues 16–26 (DQSQQQPTNNA). Residues 270 to 279 (RQNRPGRRKK) show a composition bias toward basic residues. In terms of domain architecture, PAH spans 282–352 (GPPRVDEALA…LGFNTFLPTG (71 aa)). Over residues 427–438 (DGIDDEDDEESG) the composition is skewed to acidic residues. 2 stretches are compositionally biased toward basic and acidic residues: residues 439–450 (IEDKNNEEMMEE) and 555–568 (EIKKPDDIEKKDSS). Acidic residues-rich tracts occupy residues 1354–1365 (KDDDDDDDEEGN), 1373–1382 (NVKDEDDGGD), and 1389–1421 (PDDDQPPPSNDDGDDEEDEDDEEDGPSGADEPE).

Component of the SIN3S complex, which contains at least sin-3, hda-1, athp-1 and mrg-1. Interacts with ztf-11; the interaction is weak. Interacts with cfp-1. Expressed in all ray structural cells including ray 6, 7, 8 and 9 of the male tail. Also expressed in the inner labial neurons, socket cells, the cephalic neurons in the head and the ventral nerve cord.

The protein localises to the nucleus. Probable transcriptional repressor required for the deposition of dimethylated 'Lys-9' of histone H3 (H3K9me2) on asynapsed chromosome pairs (both autosomes and sex chromosomes) during meiosis, but this does not seem to solely affect the transcriptional status. Plays a role in ray fusion and patterning in the male tail, and this may be through activity of the histone deacetylase complex (HDAC). This Caenorhabditis elegans protein is Paired amphipathic helix protein sin-3.